The chain runs to 73 residues: Large ribosomal subunit protein bL31 (73 aa).

Cys16, Cys18, Cys38, and Cys41 together coordinate Zn(2+).

The protein belongs to the bacterial ribosomal protein bL31 family. Type A subfamily. As to quaternary structure, part of the 50S ribosomal subunit. It depends on Zn(2+) as a cofactor.

Its function is as follows. Binds the 23S rRNA. The sequence is that of Large ribosomal subunit protein bL31 from Vibrio parahaemolyticus serotype O3:K6 (strain RIMD 2210633).